The primary structure comprises 255 residues: MLDAPAGRWPDPDAGEGALRRLLDGEGKDLVIDRALLRWAAERGKGPYPRAERTARWRALIETALGWTAPTFPLGGRDALACGLKGPAVGEAWRPCADAGLRAAARPGGTRCWPGSPLGGTGPPTNRPPRSRAWNRYRSDRPSPGGVLRPACGMAQGLAEHQGGGDGDVERAHAGNHRNPDAQVGALVDLGGNARALSAQQQHVVGLKVSFGMKRARLRCQQDQAGFVGEPRDEIRPGRMTHKSGAFEIVHSGAA.

Disordered stretches follow at residues 112-145 (CWPG…PSPG) and 157-183 (GLAE…PDAQ).

This is an uncharacterized protein from Rhodospirillum rubrum.